Reading from the N-terminus, the 214-residue chain is Redox-sensing transcriptional repressor Rex (214 aa).

The segment at residues 16-55 (LYYRYLIFLNDEGKEKVSSTELAEAVQVDSASIRRDFSYF) is a DNA-binding region (H-T-H motif). Residue 90-95 (GVGNMG) coordinates NAD(+).

The protein belongs to the transcriptional regulatory Rex family. Homodimer.

The protein localises to the cytoplasm. In terms of biological role, modulates transcription in response to changes in cellular NADH/NAD(+) redox state. The protein is Redox-sensing transcriptional repressor Rex of Lactobacillus gasseri (strain ATCC 33323 / DSM 20243 / BCRC 14619 / CIP 102991 / JCM 1131 / KCTC 3163 / NCIMB 11718 / NCTC 13722 / AM63).